Reading from the N-terminus, the 159-residue chain is S-ribosylhomocysteine lyase 1 (159 aa).

3 residues coordinate Fe cation: His-54, His-58, and Cys-124.

It belongs to the LuxS family. As to quaternary structure, homodimer. Fe cation serves as cofactor.

The enzyme catalyses S-(5-deoxy-D-ribos-5-yl)-L-homocysteine = (S)-4,5-dihydroxypentane-2,3-dione + L-homocysteine. Functionally, involved in the synthesis of autoinducer 2 (AI-2) which is secreted by bacteria and is used to communicate both the cell density and the metabolic potential of the environment. The regulation of gene expression in response to changes in cell density is called quorum sensing. Catalyzes the transformation of S-ribosylhomocysteine (RHC) to homocysteine (HC) and 4,5-dihydroxy-2,3-pentadione (DPD). The chain is S-ribosylhomocysteine lyase 1 from Lactobacillus delbrueckii subsp. bulgaricus (strain ATCC BAA-365 / Lb-18).